Reading from the N-terminus, the 254-residue chain is MSVSVERFGQGPDLVLLHGWGMNGAVWHGIVPALASRYRVHLVDLPGFGNSPLAGEVEYSLPWLAEEVAAILPEQCHLLGWSLGGLVASQLALSHPERLHSLITVASSPCFMARDEWPGIAPKVLAGFNQMLAGDFKQTIERFLAIQAMGSEHARDDIRQLRHWLAERPAPQLAALEAGLGLLAEVDLRDELTPLSLPWLRVYGRLDSLVPKASIPLLDERYPSSRSVVLEKASHAPFISHPQQFIEIIEHFVG.

Positions 14–242 constitute an AB hydrolase-1 domain; that stretch reads LVLLHGWGMN…ASHAPFISHP (229 aa). Substrate is bound by residues Trp20, 82–83, and 143–147; these read SL and FLAIQ. The active-site Nucleophile is the Ser82. Residues Asp207 and His235 contribute to the active site. His235 lines the substrate pocket.

Belongs to the AB hydrolase superfamily. Carboxylesterase BioH family. In terms of assembly, monomer.

The protein resides in the cytoplasm. It catalyses the reaction 6-carboxyhexanoyl-[ACP] methyl ester + H2O = 6-carboxyhexanoyl-[ACP] + methanol + H(+). It participates in cofactor biosynthesis; biotin biosynthesis. Functionally, the physiological role of BioH is to remove the methyl group introduced by BioC when the pimeloyl moiety is complete. It allows to synthesize pimeloyl-ACP via the fatty acid synthetic pathway through the hydrolysis of the ester bonds of pimeloyl-ACP esters. This is Pimeloyl-[acyl-carrier protein] methyl ester esterase from Aeromonas hydrophila subsp. hydrophila (strain ATCC 7966 / DSM 30187 / BCRC 13018 / CCUG 14551 / JCM 1027 / KCTC 2358 / NCIMB 9240 / NCTC 8049).